The sequence spans 169 residues: Protein HIGH ARSENIC CONTENT 1, mitochondrial (169 aa).

Residues 1–59 constitute a mitochondrion transit peptide; that stretch reads MYTYSLLNLSHCRRQTRKKRKTDHTEGFLMEETKPKTVEDVETVDVYTAKGFLSTGHRY. A Rhodanese domain is found at 60-153; it reads LDVRTNEEFA…WVDAGFAGDK (94 aa). C113 serves as the catalytic Cysteine persulfide intermediate.

Expressed in root hairs, epidermal cells at the surface of the root and in the pericycle within the stele.

Its subcellular location is the mitochondrion. The catalysed reaction is [glutaredoxin]-dithiol + arsenate + glutathione + H(+) = glutathionyl-S-S-[glutaredoxin] + arsenite + H2O. With respect to regulation, inhibited by trobenzenesulphonic acid (TNBS). Functionally, arsenate reductase critical for arsenic tolerance. Reduces arsenate to arsenite in the root, facilitating efflux of arsenic back into the soil to limit both its accumulation in the root and transport to the shoot. Essential for arsenite efflux from the root, but not necessary for arsenate uptake. This Arabidopsis thaliana (Mouse-ear cress) protein is Protein HIGH ARSENIC CONTENT 1, mitochondrial.